A 196-amino-acid polypeptide reads, in one-letter code: ATP-dependent Clp protease proteolytic subunit (196 aa).

Serine 101 (nucleophile) is an active-site residue. Histidine 126 is a catalytic residue.

Belongs to the peptidase S14 family. In terms of assembly, component of the chloroplastic Clp protease core complex.

The protein resides in the plastid. Its subcellular location is the chloroplast stroma. The catalysed reaction is Hydrolysis of proteins to small peptides in the presence of ATP and magnesium. alpha-casein is the usual test substrate. In the absence of ATP, only oligopeptides shorter than five residues are hydrolyzed (such as succinyl-Leu-Tyr-|-NHMec, and Leu-Tyr-Leu-|-Tyr-Trp, in which cleavage of the -Tyr-|-Leu- and -Tyr-|-Trp bonds also occurs).. Functionally, cleaves peptides in various proteins in a process that requires ATP hydrolysis. Has a chymotrypsin-like activity. Plays a major role in the degradation of misfolded proteins. The sequence is that of ATP-dependent Clp protease proteolytic subunit from Barbarea verna (Land cress).